A 146-amino-acid polypeptide reads, in one-letter code: VHLTAEEKSAVTSLWGKVNVDEVGGEALGRLLVVYPWTQRYFDSFGDLSTPDAVMGNPKVKAHGKKVLNSFSEGLKNLDNLKGTFAKLSELHCDKLHVDPENFKLLGNVLVCVLAHHFGKEFTPQVQAAYQKVVAGVANALAHKYH.

Position 1 is an N-acetylvaline (V1). A Globin domain is found at 2–146; that stretch reads HLTAEEKSAV…VANALAHKYH (145 aa). T12 carries the phosphothreonine modification. At S44 the chain carries Phosphoserine. The residue at position 59 (K59) is an N6-acetyllysine. H63 contacts heme b. K82 carries the N6-acetyllysine modification. Residue H92 coordinates heme b. An S-nitrosocysteine modification is found at C93. At K144 the chain carries N6-acetyllysine.

This sequence belongs to the globin family. In terms of assembly, heterotetramer of two alpha chains and two beta chains. Red blood cells.

In terms of biological role, involved in oxygen transport from the lung to the various peripheral tissues. The polypeptide is Hemoglobin subunit beta (HBB) (Meles meles (Eurasian badger)).